We begin with the raw amino-acid sequence, 334 residues long: 4-hydroxyproline 2-epimerase (334 aa).

The active-site Proton acceptor is Cys91. Residues Gly92–His93, His224, and Asp250 each bind substrate. Cys254 acts as the Proton donor in catalysis. Residue Gly255 to Thr256 participates in substrate binding.

This sequence belongs to the proline racemase family.

It catalyses the reaction trans-4-hydroxy-L-proline = cis-4-hydroxy-D-proline. Catalyzes the epimerization of trans-4-hydroxy-L-proline (t4LHyp) to cis-4-hydroxy-D-proline (c4DHyp). Is likely involved in a degradation pathway that converts t4LHyp to alpha-ketoglutarate. Displays no proline racemase activity. This chain is 4-hydroxyproline 2-epimerase, found in Spirosoma linguale (strain ATCC 33905 / DSM 74 / LMG 10896 / Claus 1).